The sequence spans 166 residues: Endoribonuclease YbeY (166 aa).

Zn(2+) contacts are provided by His129, His133, and His139.

Belongs to the endoribonuclease YbeY family. It depends on Zn(2+) as a cofactor.

The protein resides in the cytoplasm. In terms of biological role, single strand-specific metallo-endoribonuclease involved in late-stage 70S ribosome quality control and in maturation of the 3' terminus of the 16S rRNA. This is Endoribonuclease YbeY from Heliobacterium modesticaldum (strain ATCC 51547 / Ice1).